The following is a 623-amino-acid chain: Transketolase (623 aa).

An N-acetylmethionine modification is found at Met1. N6-acetyllysine is present on residues Lys6 and Lys11. Residue His37 coordinates substrate. Thiamine diphosphate is bound by residues Ser40 and His77. Ser104 carries the phosphoserine modification. Position 123–125 (123–125 (GSL)) interacts with thiamine diphosphate. Position 144 is an N6-acetyllysine (Lys144). Asp155 serves as a coordination point for Mg(2+). Residues Gly156 and Asn185 each coordinate thiamine diphosphate. Mg(2+)-binding residues include Asn185 and Leu187. Lys204, Lys232, and Lys241 each carry N6-acetyllysine. Thiamine diphosphate-binding residues include Lys244 and His258. His258 is a substrate binding site. Lys260 bears the N6-acetyllysine mark. Tyr275 carries the phosphotyrosine modification. Phosphothreonine is present on Thr287. Ser295 is subject to Phosphoserine. Substrate is bound by residues Arg318 and Ser345. Ser345 is modified (phosphoserine). A Glycyl lysine isopeptide (Lys-Gly) (interchain with G-Cter in SUMO2) cross-link involves residue Lys352. Residue Glu366 is the Proton donor of the active site. Thiamine diphosphate is bound at residue Phe392. Residues His416 and Asp424 each contribute to the substrate site. Residue Gln428 participates in thiamine diphosphate binding. Arg474 lines the substrate pocket. Residues Lys538 and Lys603 each carry the N6-acetyllysine modification.

This sequence belongs to the transketolase family. As to quaternary structure, homodimer. Mg(2+) serves as cofactor. It depends on Ca(2+) as a cofactor. Mn(2+) is required as a cofactor. The cofactor is Co(2+). Requires thiamine diphosphate as cofactor.

It carries out the reaction D-sedoheptulose 7-phosphate + D-glyceraldehyde 3-phosphate = aldehydo-D-ribose 5-phosphate + D-xylulose 5-phosphate. Its function is as follows. Catalyzes the transfer of a two-carbon ketol group from a ketose donor to an aldose acceptor, via a covalent intermediate with the cofactor thiamine pyrophosphate. The polypeptide is Transketolase (Tkt) (Rattus norvegicus (Rat)).